The primary structure comprises 346 residues: uncharacterized protein (346 aa).

A disordered region spans residues 322–346 (GRDGGYRETTSPPTGRGRNVRGSHA).

This is an uncharacterized protein from Mycobacterium tuberculosis (strain CDC 1551 / Oshkosh).